Reading from the N-terminus, the 237-residue chain is Riboflavin kinase (237 aa).

A unknown region spans residues 1–101 (MRLKIKAIWV…SRIFSSEPDV (101 aa)). The interval 102–237 (LELEGNVLKG…VKKQGMEGQK (136 aa)) is riboflavin kinase. 111 to 116 (GLGEGQ) is a binding site for CDP. 2 residues coordinate Mg(2+): threonine 140 and asparagine 142. Residues threonine 197 and glutamate 205 each contribute to the FMN site. CDP is bound at residue 210-213 (VKLR).

It belongs to the archaeal riboflavin kinase family. It depends on Mg(2+) as a cofactor.

It carries out the reaction riboflavin + CTP = CDP + FMN + H(+). Its pathway is cofactor biosynthesis; FMN biosynthesis; FMN from riboflavin (CTP route): step 1/1. Catalyzes the CTP-dependent phosphorylation of riboflavin (vitamin B2) to form flavin mononucleotide (FMN). The sequence is that of Riboflavin kinase (ribK) from Methanosarcina acetivorans (strain ATCC 35395 / DSM 2834 / JCM 12185 / C2A).